We begin with the raw amino-acid sequence, 452 residues long: Bifunctional purine biosynthesis protein PurH (452 aa).

The 115-residue stretch at 1–115 folds into the MGS-like domain; it reads MKRILVSLYE…KNWKKVKPAF (115 aa).

The protein belongs to the PurH family.

It catalyses the reaction (6R)-10-formyltetrahydrofolate + 5-amino-1-(5-phospho-beta-D-ribosyl)imidazole-4-carboxamide = 5-formamido-1-(5-phospho-D-ribosyl)imidazole-4-carboxamide + (6S)-5,6,7,8-tetrahydrofolate. The catalysed reaction is IMP + H2O = 5-formamido-1-(5-phospho-D-ribosyl)imidazole-4-carboxamide. It participates in purine metabolism; IMP biosynthesis via de novo pathway; 5-formamido-1-(5-phospho-D-ribosyl)imidazole-4-carboxamide from 5-amino-1-(5-phospho-D-ribosyl)imidazole-4-carboxamide (10-formyl THF route): step 1/1. The protein operates within purine metabolism; IMP biosynthesis via de novo pathway; IMP from 5-formamido-1-(5-phospho-D-ribosyl)imidazole-4-carboxamide: step 1/1. The chain is Bifunctional purine biosynthesis protein PurH from Thermotoga maritima (strain ATCC 43589 / DSM 3109 / JCM 10099 / NBRC 100826 / MSB8).